The primary structure comprises 442 residues: UDP-N-acetylmuramate--L-alanine ligase (442 aa).

Residue 109–115 (GAHGKTS) participates in ATP binding.

This sequence belongs to the MurCDEF family.

Its subcellular location is the cytoplasm. The catalysed reaction is UDP-N-acetyl-alpha-D-muramate + L-alanine + ATP = UDP-N-acetyl-alpha-D-muramoyl-L-alanine + ADP + phosphate + H(+). It participates in cell wall biogenesis; peptidoglycan biosynthesis. In terms of biological role, cell wall formation. In Streptococcus pyogenes serotype M3 (strain SSI-1), this protein is UDP-N-acetylmuramate--L-alanine ligase.